Here is a 27-residue protein sequence, read N- to C-terminus: Pregnancy-associated glycoprotein 55 (27 aa).

This sequence belongs to the peptidase A1 family. Post-translationally, glycosylated. As to expression, placenta.

The sequence is that of Pregnancy-associated glycoprotein 55 (PAG55) from Capra hircus (Goat).